The sequence spans 179 residues: Bifunctional protein PyrR (179 aa).

The short motif at 99 to 111 (VILIDDVLYTGRT) is the PRPP-binding element.

This sequence belongs to the purine/pyrimidine phosphoribosyltransferase family. PyrR subfamily. Homodimer and homohexamer; in equilibrium.

The enzyme catalyses UMP + diphosphate = 5-phospho-alpha-D-ribose 1-diphosphate + uracil. Its function is as follows. Regulates transcriptional attenuation of the pyrimidine nucleotide (pyr) operon by binding in a uridine-dependent manner to specific sites on pyr mRNA. This disrupts an antiterminator hairpin in the RNA and favors formation of a downstream transcription terminator, leading to a reduced expression of downstream genes. Also displays a weak uracil phosphoribosyltransferase activity which is not physiologically significant. This Latilactobacillus sakei subsp. sakei (strain 23K) (Lactobacillus sakei subsp. sakei) protein is Bifunctional protein PyrR.